We begin with the raw amino-acid sequence, 104 residues long: UPF0145 protein VNG_2432C (104 aa).

The protein belongs to the UPF0145 family.

The chain is UPF0145 protein VNG_2432C from Halobacterium salinarum (strain ATCC 700922 / JCM 11081 / NRC-1) (Halobacterium halobium).